Consider the following 945-residue polypeptide: Leucine--tRNA ligase 1 (945 aa).

The 'HIGH' region signature appears at proline 42–histidine 52. The 'KMSKS' region signature appears at lysine 625–serine 629. Lysine 628 serves as a coordination point for ATP.

Belongs to the class-I aminoacyl-tRNA synthetase family.

It localises to the cytoplasm. It carries out the reaction tRNA(Leu) + L-leucine + ATP = L-leucyl-tRNA(Leu) + AMP + diphosphate. The protein is Leucine--tRNA ligase 1 of Sulfurisphaera tokodaii (strain DSM 16993 / JCM 10545 / NBRC 100140 / 7) (Sulfolobus tokodaii).